The chain runs to 156 residues: Small ribosomal subunit protein uS7 (156 aa).

This sequence belongs to the universal ribosomal protein uS7 family. In terms of assembly, part of the 30S ribosomal subunit. Contacts proteins S9 and S11.

In terms of biological role, one of the primary rRNA binding proteins, it binds directly to 16S rRNA where it nucleates assembly of the head domain of the 30S subunit. Is located at the subunit interface close to the decoding center, probably blocks exit of the E-site tRNA. This is Small ribosomal subunit protein uS7 from Citrifermentans bemidjiense (strain ATCC BAA-1014 / DSM 16622 / JCM 12645 / Bem) (Geobacter bemidjiensis).